The chain runs to 271 residues: Formamidopyrimidine-DNA glycosylase (271 aa).

Pro-2 acts as the Schiff-base intermediate with DNA in catalysis. Residue Glu-3 is the Proton donor of the active site. Lys-58 (proton donor; for beta-elimination activity) is an active-site residue. Positions 91, 110, and 152 each coordinate DNA. The FPG-type zinc finger occupies 237–271; sequence WVYGRAGQSCRQCGELVSKTRQGQRSTFFCARCQH. The active-site Proton donor; for delta-elimination activity is the Arg-261.

It belongs to the FPG family. As to quaternary structure, monomer. The cofactor is Zn(2+).

The enzyme catalyses Hydrolysis of DNA containing ring-opened 7-methylguanine residues, releasing 2,6-diamino-4-hydroxy-5-(N-methyl)formamidopyrimidine.. It carries out the reaction 2'-deoxyribonucleotide-(2'-deoxyribose 5'-phosphate)-2'-deoxyribonucleotide-DNA = a 3'-end 2'-deoxyribonucleotide-(2,3-dehydro-2,3-deoxyribose 5'-phosphate)-DNA + a 5'-end 5'-phospho-2'-deoxyribonucleoside-DNA + H(+). Functionally, involved in base excision repair of DNA damaged by oxidation or by mutagenic agents. Acts as a DNA glycosylase that recognizes and removes damaged bases. Has a preference for oxidized purines, such as 7,8-dihydro-8-oxoguanine (8-oxoG). Has AP (apurinic/apyrimidinic) lyase activity and introduces nicks in the DNA strand. Cleaves the DNA backbone by beta-delta elimination to generate a single-strand break at the site of the removed base with both 3'- and 5'-phosphates. This is Formamidopyrimidine-DNA glycosylase from Nitrosomonas europaea (strain ATCC 19718 / CIP 103999 / KCTC 2705 / NBRC 14298).